Here is a 731-residue protein sequence, read N- to C-terminus: 1,4-alpha-glucan branching enzyme GlgB (731 aa).

Catalysis depends on Asp409, which acts as the Nucleophile. The Proton donor role is filled by Glu462.

Belongs to the glycosyl hydrolase 13 family. GlgB subfamily. In terms of assembly, monomer.

It catalyses the reaction Transfers a segment of a (1-&gt;4)-alpha-D-glucan chain to a primary hydroxy group in a similar glucan chain.. The protein operates within glycan biosynthesis; glycogen biosynthesis. Functionally, catalyzes the formation of the alpha-1,6-glucosidic linkages in glycogen by scission of a 1,4-alpha-linked oligosaccharide from growing alpha-1,4-glucan chains and the subsequent attachment of the oligosaccharide to the alpha-1,6 position. The polypeptide is 1,4-alpha-glucan branching enzyme GlgB (glgB) (Dickeya chrysanthemi (Pectobacterium chrysanthemi)).